Reading from the N-terminus, the 210-residue chain is Ras-related protein Rab-43 (210 aa).

Residue 23–30 (GDASVGKT) participates in GTP binding. Residues 45 to 53 (QGSTIGVDF) carry the Effector region motif. Phosphoserine is present on Ser47. Position 71–75 (71–75 (DTAGQ)) interacts with GTP. Thr80 carries the phosphothreonine modification. Residues 129 to 132 (NKSD) and 161 to 162 (AK) each bind GTP. Residues Cys208 and Cys210 are each lipidated (S-geranylgeranyl cysteine). At Cys210 the chain carries Cysteine methyl ester.

This sequence belongs to the small GTPase superfamily. Rab family. As to quaternary structure, interacts with GDI1, GDI2 and CHM; phosphorylation at Thr-80 disrupts these interactions.

Its subcellular location is the cytoplasmic vesicle. The protein localises to the phagosome. It is found in the phagosome membrane. The protein resides in the golgi apparatus. It localises to the trans-Golgi network membrane. Its subcellular location is the trans-Golgi network. In terms of biological role, the small GTPases Rab are key regulators of intracellular membrane trafficking, from the formation of transport vesicles to their fusion with membranes. Rabs cycle between an inactive GDP-bound form and an active GTP-bound form that is able to recruit to membranes different set of downstream effectors directly responsible for vesicle formation, movement, tethering and fusion. The low intrinsic GTPase activity of RAB43 is activated by USP6NL. Involved in retrograde transport from the endocytic pathway to the Golgi apparatus. Involved in the transport of Shiga toxin from early and recycling endosomes to the trans-Golgi network. Required for the structural integrity of the Golgi complex. Plays a role in the maturation of phagosomes that engulf pathogens, such as S.aureus and Mycobacterium. This Rattus norvegicus (Rat) protein is Ras-related protein Rab-43 (Rab43).